The following is a 131-amino-acid chain: Profilin (131 aa).

The protein belongs to the profilin family. In terms of assembly, occurs in many kinds of cells as a complex with monomeric actin in a 1:1 ratio.

The protein localises to the cytoplasm. It localises to the cytoskeleton. Binds to actin and affects the structure of the cytoskeleton. At high concentrations, profilin prevents the polymerization of actin, whereas it enhances it at low concentrations. By binding to PIP2, it inhibits the formation of IP3 and DG. The polypeptide is Profilin (Prunus avium (Cherry)).